Here is an 88-residue protein sequence, read N- to C-terminus: UPF0250 protein IL0958 (88 aa).

This sequence belongs to the UPF0250 family.

In Idiomarina loihiensis (strain ATCC BAA-735 / DSM 15497 / L2-TR), this protein is UPF0250 protein IL0958.